A 173-amino-acid polypeptide reads, in one-letter code: Alpha-crystallin A chain (173 aa).

At Met-1 the chain carries N-acetylmethionine. Positions 1–63 are required for complex formation with BFSP1 and BFSP2; the sequence is MDVTIQHPWF…RTVLDSGISE (63 aa). Gln-6 is subject to Deamidated glutamine; partial. Ser-45 carries the post-translational modification Phosphoserine. Deamidated glutamine; partial is present on Gln-50. Positions 52–162 constitute a sHSP domain; sequence LFRTVLDSGI…GHSERAIPVS (111 aa). Lys-70 is modified (N6-acetyllysine). Residue Gln-90 is modified to Deamidated glutamine; partial. Lys-99 carries the post-translational modification N6-acetyllysine. His-100 provides a ligand contact to Zn(2+). Asn-101 carries the post-translational modification Deamidated asparagine; partial. Zn(2+) contacts are provided by Glu-102 and His-107. A Phosphoserine modification is found at Ser-122. The residue at position 123 (Asn-123) is a Deamidated asparagine; partial. Residues 145 to 173 are disordered; sequence KVQSGLDAGHSERAIPVSREEKPSSAPSS. Residue Gln-147 is modified to Deamidated glutamine; partial. Over residues 153 to 167 the composition is skewed to basic and acidic residues; it reads GHSERAIPVSREEKP. His-154 contacts Zn(2+). An O-linked (GlcNAc) serine glycan is attached at Ser-162.

It belongs to the small heat shock protein (HSP20) family. Heteromer composed of three CRYAA and one CRYAB subunits. Inter-subunit bridging via zinc ions enhances stability, which is crucial as there is no protein turn over in the lens. Can also form homodimers and homotetramers (dimers of dimers) which serve as the building blocks of homooligomers. Within homooligomers, the zinc-binding motif is created from residues of 3 different molecules. His-100 and Glu-102 from one molecule are ligands of the zinc ion, and His-107 and His-154 residues from additional molecules complete the site with tetrahedral coordination geometry. Part of a complex required for lens intermediate filament formation composed of BFSP1, BFSP2 and CRYAA. Acetylation at Lys-70 may increase chaperone activity. In terms of processing, undergoes age-dependent proteolytical cleavage at the C-terminus.

It is found in the cytoplasm. The protein resides in the nucleus. Contributes to the transparency and refractive index of the lens. Acts as a chaperone, preventing aggregation of various proteins under a wide range of stress conditions. Required for the correct formation of lens intermediate filaments as part of a complex composed of BFSP1, BFSP2 and CRYAA. In Oryctolagus cuniculus (Rabbit), this protein is Alpha-crystallin A chain (CRYAA).